Here is a 221-residue protein sequence, read N- to C-terminus: Probable septum site-determining protein MinC (221 aa).

It belongs to the MinC family. Interacts with MinD and FtsZ.

Its function is as follows. Cell division inhibitor that blocks the formation of polar Z ring septums. Rapidly oscillates between the poles of the cell to destabilize FtsZ filaments that have formed before they mature into polar Z rings. Prevents FtsZ polymerization. This chain is Probable septum site-determining protein MinC, found in Aliivibrio fischeri (strain MJ11) (Vibrio fischeri).